The chain runs to 843 residues: Lon protease (843 aa).

Residues Met-1–Gly-16 are compositionally biased toward basic and acidic residues. The tract at residues Met-1–Gln-22 is disordered. The Lon N-terminal domain occupies Leu-42–Arg-236. Gly-388 to Thr-395 lines the ATP pocket. The Lon proteolytic domain occupies Thr-627–Glu-808. Catalysis depends on residues Ser-714 and Lys-757. The segment at Ala-805 to Val-843 is disordered.

This sequence belongs to the peptidase S16 family. As to quaternary structure, homohexamer. Organized in a ring with a central cavity.

It localises to the cytoplasm. It catalyses the reaction Hydrolysis of proteins in presence of ATP.. Functionally, ATP-dependent serine protease that mediates the selective degradation of mutant and abnormal proteins as well as certain short-lived regulatory proteins. Required for cellular homeostasis and for survival from DNA damage and developmental changes induced by stress. Degrades polypeptides processively to yield small peptide fragments that are 5 to 10 amino acids long. Binds to DNA in a double-stranded, site-specific manner. In Anaeromyxobacter dehalogenans (strain 2CP-C), this protein is Lon protease.